Reading from the N-terminus, the 286-residue chain is Probable aquaporin PIP-type pTOM75 (286 aa).

Residues 1–35 (MAENKEEDVKLGANKFRETQPLGTAAQTDKDYKEP) are disordered. The Cytoplasmic portion of the chain corresponds to 1-55 (MAENKEEDVKLGANKFRETQPLGTAAQTDKDYKEPPPAPLFEPGELSSWSFYRAG). Residues 7–18 (EDVKLGANKFRE) are compositionally biased toward basic and acidic residues. Residues 56–76 (IAEFMATFLFLYITILTVMGL) traverse the membrane as a helical segment. Topologically, residues 77–89 (KRSDSLCSSVGIQ) are extracellular. A helical membrane pass occupies residues 90–110 (GVAWAFGGMIFALVYCTAGIS). The Cytoplasmic portion of the chain corresponds to 111-133 (GGHINPAVTFGLFLARKLSLTRA). The short motif at 115 to 117 (NPA) is the NPA 1 element. Residues 134-154 (VFYMVMQCLGAICGAGVVKGF) traverse the membrane as a helical segment. The Extracellular portion of the chain corresponds to 155–175 (MVGPYQRLGGGANVVNPGYTK). A helical membrane pass occupies residues 176 to 196 (GDGLGAEIIGTFVLVYTVFSA). The Cytoplasmic segment spans residues 197 to 209 (TDAKRNARDSHVP). The chain crosses the membrane as a helical span at residues 210–230 (ILAPLPIGFAVFLVHLATIPI). The Extracellular segment spans residues 231–257 (TGTGINPARSLGAAIIYNDEHAWNDHW). The NPA 2 signature appears at 236-238 (NPA). A helical transmembrane segment spans residues 258-278 (IFWVGPMIGAALAAIYHQIII). At 279-286 (RAMPFHRS) the chain is on the cytoplasmic side.

It belongs to the MIP/aquaporin (TC 1.A.8) family. PIP (TC 1.A.8.11) subfamily. Roots, ripening fruit and senescing leaves.

The protein localises to the cell membrane. Its function is as follows. Aquaporins facilitate the transport of water and small neutral solutes across cell membranes. The protein is Probable aquaporin PIP-type pTOM75 of Solanum lycopersicum (Tomato).